Consider the following 295-residue polypeptide: Acetaldehyde dehydrogenase (295 aa).

11–14 (SGNI) contributes to the NAD(+) binding site. Cysteine 127 (acyl-thioester intermediate) is an active-site residue. NAD(+) contacts are provided by residues 158 to 166 (SAGPGTRSN) and asparagine 269.

It belongs to the acetaldehyde dehydrogenase family.

It catalyses the reaction acetaldehyde + NAD(+) + CoA = acetyl-CoA + NADH + H(+). The sequence is that of Acetaldehyde dehydrogenase from Brevibacillus brevis (strain 47 / JCM 6285 / NBRC 100599).